A 166-amino-acid polypeptide reads, in one-letter code: Ribosomal RNA large subunit methyltransferase H (166 aa).

Residues leucine 85, glycine 116, and isoleucine 135–phenylalanine 140 each bind S-adenosyl-L-methionine.

Belongs to the RNA methyltransferase RlmH family. As to quaternary structure, homodimer.

It localises to the cytoplasm. It catalyses the reaction pseudouridine(1915) in 23S rRNA + S-adenosyl-L-methionine = N(3)-methylpseudouridine(1915) in 23S rRNA + S-adenosyl-L-homocysteine + H(+). Specifically methylates the pseudouridine at position 1915 (m3Psi1915) in 23S rRNA. The chain is Ribosomal RNA large subunit methyltransferase H from Francisella tularensis subsp. holarctica (strain FTNF002-00 / FTA).